Here is a 54-residue protein sequence, read N- to C-terminus: Ribulose bisphosphate carboxylase large chain (54 aa).

A propeptide spanning residues 1–2 (MS) is cleaved from the precursor. Residue Pro-3 is modified to N-acetylproline. Lys-14 is modified (N6,N6,N6-trimethyllysine).

It belongs to the RuBisCO large chain family. Type I subfamily. Heterohexadecamer of 8 large chains and 8 small chains.

It localises to the plastid. It is found in the chloroplast. It catalyses the reaction 2 (2R)-3-phosphoglycerate + 2 H(+) = D-ribulose 1,5-bisphosphate + CO2 + H2O. The enzyme catalyses D-ribulose 1,5-bisphosphate + O2 = 2-phosphoglycolate + (2R)-3-phosphoglycerate + 2 H(+). Functionally, ruBisCO catalyzes two reactions: the carboxylation of D-ribulose 1,5-bisphosphate, the primary event in carbon dioxide fixation, as well as the oxidative fragmentation of the pentose substrate in the photorespiration process. Both reactions occur simultaneously and in competition at the same active site. The protein is Ribulose bisphosphate carboxylase large chain (rbcL) of Ilex ciliospinosa (Sichuan holly).